The following is a 1009-amino-acid chain: DENN domain-containing protein 2A (1009 aa).

Disordered stretches follow at residues 15-153 (AEAS…LRFQ), 171-334 (KDGS…HRKS), 434-479 (KLLD…KKRK), and 498-532 (KRVKRLSQSMESNSGKVTDENSESDSDTEEKLKAH). Composition is skewed to basic and acidic residues over residues 45 to 59 (NIKDKISEWEGKKEV), 130 to 147 (QPEREVDPSWGRGREPRL), 218 to 247 (HPSDLEGREPTPELVEDRKGSCRRPWDRSL), and 275 to 284 (HAGEGDKDGK). Positions 297–314 (PPLPSLPPPPLPSSPPPS) are enriched in pro residues. Basic and acidic residues predominate over residues 434-443 (KLLDTRKLSR). A compositionally biased stretch (polar residues) spans 503 to 513 (LSQSMESNSGK). Ser551 carries the post-translational modification Phosphoserine. Positions 566–715 (EYFVVVSLHK…PFPALGKTIL (150 aa)) constitute a uDENN domain. Residues 737 to 870 (RLEHVDFESL…LQVALEHILE (134 aa)) enclose the cDENN domain. The dDENN domain maps to 872 to 969 (RNELACEQDE…QERELRRQDA (98 aa)).

It is found in the cytoplasm. The protein localises to the cytoskeleton. Functionally, guanine nucleotide exchange factor (GEF) which may activate RAB9A and RAB9B. Promotes the exchange of GDP to GTP, converting inactive GDP-bound Rab proteins into their active GTP-bound form. May play a role in late endosomes back to trans-Golgi network/TGN transport. This Homo sapiens (Human) protein is DENN domain-containing protein 2A (DENND2A).